Here is a 968-residue protein sequence, read N- to C-terminus: Isoleucine--tRNA ligase (968 aa).

The short motif at 68-78 (PYANGALHMGH) is the 'HIGH' region element. Glu582 lines the L-isoleucyl-5'-AMP pocket. Positions 623-627 (KMSKS) match the 'KMSKS' region motif. Lys626 contributes to the ATP binding site. Positions 936, 939, 956, and 959 each coordinate Zn(2+).

Belongs to the class-I aminoacyl-tRNA synthetase family. IleS type 1 subfamily. As to quaternary structure, monomer. Zn(2+) serves as cofactor.

It localises to the cytoplasm. It catalyses the reaction tRNA(Ile) + L-isoleucine + ATP = L-isoleucyl-tRNA(Ile) + AMP + diphosphate. Catalyzes the attachment of isoleucine to tRNA(Ile). As IleRS can inadvertently accommodate and process structurally similar amino acids such as valine, to avoid such errors it has two additional distinct tRNA(Ile)-dependent editing activities. One activity is designated as 'pretransfer' editing and involves the hydrolysis of activated Val-AMP. The other activity is designated 'posttransfer' editing and involves deacylation of mischarged Val-tRNA(Ile). In Prochlorococcus marinus (strain AS9601), this protein is Isoleucine--tRNA ligase.